The chain runs to 320 residues: tRNA uridine(34) hydroxylase (320 aa).

In terms of domain architecture, Rhodanese spans 123–217; sequence EDENTVILDA…YGKDPETKGQ (95 aa). Cysteine 177 acts as the Cysteine persulfide intermediate in catalysis.

This sequence belongs to the TrhO family.

It carries out the reaction uridine(34) in tRNA + AH2 + O2 = 5-hydroxyuridine(34) in tRNA + A + H2O. Catalyzes oxygen-dependent 5-hydroxyuridine (ho5U) modification at position 34 in tRNAs. The chain is tRNA uridine(34) hydroxylase from Staphylococcus epidermidis (strain ATCC 12228 / FDA PCI 1200).